Consider the following 86-residue polypeptide: DNA replication protein 1 (86 aa).

Residues Leu-38 to Asn-67 are a coiled coil.

This sequence belongs to the phi29likevirus DNA replication protein 1 family. As to quaternary structure, homomultimer. Self-associates into large complexes forming long filamentous structures. Interacts (via N-terminus) with the primer terminal protein. Interacts with host FtsZ protein.

It localises to the host membrane. Protein that assembles into highly ordered structures and provides a specific site for viral DNA replication. Probably anchors the viral DNA replisome to the host membrane. This chain is DNA replication protein 1 (1), found in Bacillus subtilis (Bacteriophage phi-29).